Reading from the N-terminus, the 395-residue chain is tRNA (guanine-N(7)-)-methyltransferase (395 aa).

Glu-126, Glu-151, and Asp-178 together coordinate S-adenosyl-L-methionine. The substrate site is built by Lys-204 and Asp-234.

It belongs to the class I-like SAM-binding methyltransferase superfamily. TrmB family.

The catalysed reaction is guanosine(46) in tRNA + S-adenosyl-L-methionine = N(7)-methylguanosine(46) in tRNA + S-adenosyl-L-homocysteine. Its pathway is tRNA modification; N(7)-methylguanine-tRNA biosynthesis. Catalyzes the formation of N(7)-methylguanine at position 46 (m7G46) in tRNA. This Campylobacter fetus subsp. fetus (strain 82-40) protein is tRNA (guanine-N(7)-)-methyltransferase.